Reading from the N-terminus, the 350-residue chain is Homeobox-leucine zipper protein HOX5 (350 aa).

Positions A83 to Q142 form a DNA-binding region, homeobox. Positions K141 to K185 are leucine-zipper. Residues E180 to A254 form a disordered region. Over residues S188 to A198 the composition is skewed to low complexity.

Belongs to the HD-ZIP homeobox family. Class I subfamily. As to quaternary structure, homodimer. May form a heterodimer with HOX4. Expressed in seedlings, roots, leaves, nodes, internodes, flowers and embryo.

It localises to the nucleus. Its function is as follows. Probable transcription activator that binds to the DNA sequence 5'-CAAT[AT]ATTG-3'. The polypeptide is Homeobox-leucine zipper protein HOX5 (HOX5) (Oryza sativa subsp. indica (Rice)).